A 362-amino-acid chain; its full sequence is Patr class I histocompatibility antigen, B-2 alpha chain (362 aa).

A signal peptide spans 1-24 (MQVTAPRTVLLLLSAALALTETWA). The alpha-1 stretch occupies residues 25–114 (GSHSMKYFYT…LRGYYNQSEA (90 aa)). Over 25 to 308 (GSHSMKYFYT…EPSSQSTIPI (284 aa)) the chain is Extracellular. Residue Asn-110 is glycosylated (N-linked (GlcNAc...) asparagine). Residues 115 to 206 (GSHIIQRMYG…ENGKETLQRA (92 aa)) are alpha-2. 2 disulfides stabilise this stretch: Cys-125/Cys-188 and Cys-227/Cys-283. The alpha-3 stretch occupies residues 207-298 (DPPKTHVTHH…GLPKPLTLRW (92 aa)). An Ig-like C1-type domain is found at 209-295 (PKTHVTHHPI…QHEGLPKPLT (87 aa)). A connecting peptide region spans residues 299–308 (EPSSQSTIPI). The chain crosses the membrane as a helical span at residues 309-332 (VGIVAGLAVLAVVVIGAVVAAVMC). Residues 333–362 (RRKSSGGKGGSYSQAASSDSAQGSDVSLTA) lie on the Cytoplasmic side of the membrane. Positions 336–362 (SSGGKGGSYSQAASSDSAQGSDVSLTA) are disordered. Residues 343-362 (SYSQAASSDSAQGSDVSLTA) are compositionally biased toward low complexity.

This sequence belongs to the MHC class I family. As to quaternary structure, heterodimer of an alpha chain and a beta chain (beta-2-microglobulin).

The protein localises to the membrane. Involved in the presentation of foreign antigens to the immune system. The polypeptide is Patr class I histocompatibility antigen, B-2 alpha chain (Pan troglodytes (Chimpanzee)).